We begin with the raw amino-acid sequence, 662 residues long: uncharacterized protein (662 aa).

5 disordered regions span residues 1–94 (MSQR…NENN), 107–237 (DHNN…VKYH), 288–328 (ETTS…TPSA), 406–440 (QSSF…PIQM), and 506–580 (QNSI…MVSP). Residues 25–49 (TTTTTPTPTTTTTTTSSLSSSTSST) show a composition bias toward low complexity. Over residues 77 to 87 (DNIKLDNEKTF) the composition is skewed to basic and acidic residues. A compositionally biased stretch (low complexity) spans 109–161 (NNNNNNNNNNNNNNNNNNNNNNNNNNNNNNNNNNNNNNNNNNNNNNNNNNNNN). The span at 162 to 176 (DTQKGTNKNENNCTD) shows a compositional bias: polar residues. Low complexity predominate over residues 183-196 (STSTTSSSETGSST). Polar residues predominate over residues 203 to 212 (KTPQSCLKKS). Residues 213–224 (NNNNNDNNNNNN) are compositionally biased toward low complexity. Residues 226–235 (KTPRSTKKVK) are compositionally biased toward basic residues. 4 stretches are compositionally biased toward low complexity: residues 288–308 (ETTS…TPIP), 413–434 (PTNN…TTTP), 515–526 (PTKSSSSTSIQQ), and 535–575 (NINN…NNNN).

This is an uncharacterized protein from Dictyostelium discoideum (Social amoeba).